We begin with the raw amino-acid sequence, 572 residues long: Proline--tRNA ligase (572 aa).

It belongs to the class-II aminoacyl-tRNA synthetase family. ProS type 1 subfamily. Homodimer.

The protein resides in the cytoplasm. The enzyme catalyses tRNA(Pro) + L-proline + ATP = L-prolyl-tRNA(Pro) + AMP + diphosphate. Functionally, catalyzes the attachment of proline to tRNA(Pro) in a two-step reaction: proline is first activated by ATP to form Pro-AMP and then transferred to the acceptor end of tRNA(Pro). As ProRS can inadvertently accommodate and process non-cognate amino acids such as alanine and cysteine, to avoid such errors it has two additional distinct editing activities against alanine. One activity is designated as 'pretransfer' editing and involves the tRNA(Pro)-independent hydrolysis of activated Ala-AMP. The other activity is designated 'posttransfer' editing and involves deacylation of mischarged Ala-tRNA(Pro). The misacylated Cys-tRNA(Pro) is not edited by ProRS. The chain is Proline--tRNA ligase from Haemophilus influenzae (strain PittEE).